The following is a 138-amino-acid chain: Dual specificity phosphatase ibp1 (138 aa).

The 115-residue stretch at 19-133 folds into the Rhodanese domain; the sequence is SPNEISIIDV…WKRRYGGQQG (115 aa). Residue C70 is the Phosphocysteine intermediate of the active site.

This sequence belongs to the MPI phosphatase family.

It localises to the cytoplasm. The protein resides in the nucleus. The enzyme catalyses O-phospho-L-tyrosyl-[protein] + H2O = L-tyrosyl-[protein] + phosphate. Its function is as follows. May play a role in DNA replication checkpoint via regulation of hsk1 or may act downstream of hsk1 in an S phase regulatory pathway. This chain is Dual specificity phosphatase ibp1 (ibp1), found in Schizosaccharomyces pombe (strain 972 / ATCC 24843) (Fission yeast).